The following is a 226-amino-acid chain: Transmembrane protein 204 (226 aa).

Residues 1 to 5 (MTVQR) lie on the Cytoplasmic side of the membrane. A helical membrane pass occupies residues 6–26 (LVAAAVLVALVSLILNNVAAF). Topologically, residues 27 to 103 (TSNWVCQTLE…LQFDMMRACN (77 aa)) are extracellular. A helical transmembrane segment spans residues 104 to 124 (LVATAALTAGQLTFLLGLVGL). The Cytoplasmic segment spans residues 125–136 (PLLSPDAPCWEE). The chain crosses the membrane as a helical span at residues 137-157 (AMAAAFQLASFVLVIGLVTFY). Topologically, residues 158 to 170 (RIGPYTNLSWSCY) are extracellular. Residue Asn164 is glycosylated (N-linked (GlcNAc...) asparagine). A helical transmembrane segment spans residues 171-191 (LNIGACLLATLAAAMLIWNIL). Residues 192 to 226 (HKREDCMAPRVIVISRSLTARFRRGLDNDYVESPC) lie on the Cytoplasmic side of the membrane.

As to expression, highly expressed in lung, heart, kidney and placenta. Lower expression in thymus, spleen, liver, testis and ovary. Expressed in endothelial and restricted epithelial cell populations.

The protein localises to the cell junction. It localises to the adherens junction. It is found in the cell membrane. Can influence paracellular permeability. Appears to be involved in cell-cell interactions through adherens. This chain is Transmembrane protein 204 (TMEM204), found in Homo sapiens (Human).